Here is a 195-residue protein sequence, read N- to C-terminus: Imidazoleglycerol-phosphate dehydratase (195 aa).

Belongs to the imidazoleglycerol-phosphate dehydratase family.

Its subcellular location is the cytoplasm. The enzyme catalyses D-erythro-1-(imidazol-4-yl)glycerol 3-phosphate = 3-(imidazol-4-yl)-2-oxopropyl phosphate + H2O. It participates in amino-acid biosynthesis; L-histidine biosynthesis; L-histidine from 5-phospho-alpha-D-ribose 1-diphosphate: step 6/9. The sequence is that of Imidazoleglycerol-phosphate dehydratase from Paraburkholderia phytofirmans (strain DSM 17436 / LMG 22146 / PsJN) (Burkholderia phytofirmans).